The following is a 523-amino-acid chain: Arylsulfatase K (523 aa).

A signal peptide spans 1 to 16 (MLRVFVLLIFNVNAYC). Ca(2+) is bound by residues aspartate 35 and cysteine 75. The active-site Nucleophile is the cysteine 75. Cysteine 75 carries the 3-oxoalanine (Cys) modification. Asparagine 103 carries an N-linked (GlcNAc...) asparagine glycan. Substrate is bound by residues lysine 123 and histidine 246. Residue asparagine 257 is glycosylated (N-linked (GlcNAc...) asparagine). 2 residues coordinate Ca(2+): aspartate 308 and histidine 309. N-linked (GlcNAc...) asparagine glycosylation occurs at asparagine 405.

This sequence belongs to the sulfatase family. Ca(2+) is required as a cofactor. Post-translationally, the conversion to 3-oxoalanine (also known as C-formylglycine, FGly), of a serine or cysteine residue in prokaryotes and of a cysteine residue in eukaryotes, is critical for catalytic activity.

Its subcellular location is the secreted. The protein localises to the lysosome. The catalysed reaction is an aryl sulfate + H2O = a phenol + sulfate + H(+). It catalyses the reaction Hydrolysis of the 2-sulfate groups of the 2-O-sulfo-D-glucuronate residues of chondroitin sulfate, heparin and heparitin sulfate.. Functionally, catalyzes the hydrolysis of pseudosubstrates such as p-nitrocatechol sulfate and p-nitrophenyl sulfate. Catalyzes the hydrolysis of the 2-sulfate groups of the 2-O-sulfo-D-glucuronate residues of chondroitin sulfate, heparin and heparitin sulfate. Acts selectively on 2-sulfoglucuronate and lacks activity against 2-sulfoiduronate. This chain is Arylsulfatase K (arsk), found in Danio rerio (Zebrafish).